A 499-amino-acid chain; its full sequence is Ribulose bisphosphate carboxylase large chain (499 aa).

Residues N139 and T189 each coordinate substrate. K191 functions as the Proton acceptor in the catalytic mechanism. K193 provides a ligand contact to substrate. 3 residues coordinate Mg(2+): K217, D219, and E220. K217 carries the N6-carboxylysine modification. H309 serves as the catalytic Proton acceptor. Residues R310, H342, and S394 each coordinate substrate.

This sequence belongs to the RuBisCO large chain family. Type I subfamily. In terms of assembly, heterohexadecamer of 8 large chains and 8 small chains. Requires Mg(2+) as cofactor.

It carries out the reaction 2 (2R)-3-phosphoglycerate + 2 H(+) = D-ribulose 1,5-bisphosphate + CO2 + H2O. The enzyme catalyses D-ribulose 1,5-bisphosphate + O2 = 2-phosphoglycolate + (2R)-3-phosphoglycerate + 2 H(+). Functionally, ruBisCO catalyzes two reactions: the carboxylation of D-ribulose 1,5-bisphosphate, the primary event in carbon dioxide fixation, as well as the oxidative fragmentation of the pentose substrate. Both reactions occur simultaneously and in competition at the same active site. The sequence is that of Ribulose bisphosphate carboxylase large chain from Paraburkholderia xenovorans (strain LB400).